Here is a 458-residue protein sequence, read N- to C-terminus: Peptidyl-prolyl cis-trans isomerase FKBP4 (458 aa).

Residue methionine 1 is modified to N-acetylmethionine; in peptidyl-prolyl cis-trans isomerase FKBP4; alternate. Residues 1–24 form a disordered region; sequence MTAEEMKAAENGAQSAPLPLEGVD. Threonine 2 bears the N-acetylthreonine; in peptidyl-prolyl cis-trans isomerase FKBP4, N-terminally processed; partial mark. The PPIase FKBP-type 1 domain occupies 50 to 138; sequence GDRVFVHYTG…VFEVELFEFK (89 aa). Threonine 143 is modified (phosphothreonine; by CK2). The 87-residue stretch at 167 to 253 folds into the PPIase FKBP-type 2 domain; sequence GAMVEVALEG…RYEVRLKSFE (87 aa). Position 220 is a phosphotyrosine (tyrosine 220). Residues 267–400 form an interaction with tubulin region; sequence LEQSNIVKER…TQLAVCQQRT (134 aa). TPR repeat units lie at residues 270–303, 319–352, and 353–386; these read SNIVKERGTAYFKEGKYKQALLQYKKIVSWLEYE, LASHLNLAMCHLKLQAFSAAIESCNKALELDSNN, and EKGLFRRGEAHLAVNDFDLARADFQKVLQLYPSN. An N6-acetyllysine modification is found at lysine 282. The residue at position 373 (arginine 373) is an Omega-N-methylarginine. Positions 428-458 are disordered; sequence EVAAGDHPTDAEMKGERNNVAENQSRVETEA. Residues 434–458 are compositionally biased toward basic and acidic residues; it reads HPTDAEMKGERNNVAENQSRVETEA. Threonine 436 carries the phosphothreonine modification. Lysine 441 is covalently cross-linked (Glycyl lysine isopeptide (Lys-Gly) (interchain with G-Cter in SUMO1)). Serine 452 bears the Phosphoserine mark.

As to quaternary structure, homodimer. Interacts with GLMN. Associates with HSP90AA1 and HSPA1A/HSPA1B in steroid hormone receptor complexes. Also interacts with peroxisomal phytanoyl-CoA alpha-hydroxylase (PHYH). Interacts with NR3C1 and dynein. Interacts with HSF1 in the HSP90 complex. Associates with tubulin. Interacts with MAPT/TAU. Interacts (via TPR domain) with S100A1, S100A2 and S100A6; the interaction is Ca(2+) dependent. Interaction with S100A1 and S100A2 (but not with S100A6) leads to inhibition of FKBP4-HSP90 interaction. Interacts with dynein; contributes to NR3C1 transport to the nucleus. In terms of processing, phosphorylation by CK2 results in loss of HSP90 binding activity.

The protein resides in the cytoplasm. The protein localises to the cytosol. Its subcellular location is the mitochondrion. It localises to the nucleus. It is found in the cytoskeleton. The catalysed reaction is [protein]-peptidylproline (omega=180) = [protein]-peptidylproline (omega=0). Inhibited by FK506. Its function is as follows. Immunophilin protein with PPIase and co-chaperone activities. Component of steroid receptors heterocomplexes through interaction with heat-shock protein 90 (HSP90). May play a role in the intracellular trafficking of heterooligomeric forms of steroid hormone receptors between cytoplasm and nuclear compartments. The isomerase activity controls neuronal growth cones via regulation of TRPC1 channel opening. Also acts as a regulator of microtubule dynamics by inhibiting MAPT/TAU ability to promote microtubule assembly. May have a protective role against oxidative stress in mitochondria. The chain is Peptidyl-prolyl cis-trans isomerase FKBP4 (Fkbp4) from Mus musculus (Mouse).